The sequence spans 184 residues: ATP synthase subunit b, chloroplastic (184 aa).

The chain crosses the membrane as a helical span at residues 27–49 (LATNPINLSVVLGVLIFFGKGVL).

It belongs to the ATPase B chain family. F-type ATPases have 2 components, F(1) - the catalytic core - and F(0) - the membrane proton channel. F(1) has five subunits: alpha(3), beta(3), gamma(1), delta(1), epsilon(1). F(0) has four main subunits: a(1), b(1), b'(1) and c(10-14). The alpha and beta chains form an alternating ring which encloses part of the gamma chain. F(1) is attached to F(0) by a central stalk formed by the gamma and epsilon chains, while a peripheral stalk is formed by the delta, b and b' chains.

It is found in the plastid. Its subcellular location is the chloroplast thylakoid membrane. In terms of biological role, f(1)F(0) ATP synthase produces ATP from ADP in the presence of a proton or sodium gradient. F-type ATPases consist of two structural domains, F(1) containing the extramembraneous catalytic core and F(0) containing the membrane proton channel, linked together by a central stalk and a peripheral stalk. During catalysis, ATP synthesis in the catalytic domain of F(1) is coupled via a rotary mechanism of the central stalk subunits to proton translocation. Its function is as follows. Component of the F(0) channel, it forms part of the peripheral stalk, linking F(1) to F(0). In Cucumis sativus (Cucumber), this protein is ATP synthase subunit b, chloroplastic.